Here is a 107-residue protein sequence, read N- to C-terminus: MEQFQHISVTDAQEKLNQKDHNARMVDIRDPQSFGRGHVDGAFHLTNDTIVTLMNEVEFEQPVLVMCYHGHSSQGAAQYLINQGYEEVYSVDGGFEGWNKAGLPVEK.

Residues 19–107 form the Rhodanese domain; that stretch reads KDHNARMVDI…WNKAGLPVEK (89 aa). Catalysis depends on cysteine 67, which acts as the Cysteine persulfide intermediate.

Belongs to the GlpE family.

The protein localises to the cytoplasm. The enzyme catalyses thiosulfate + hydrogen cyanide = thiocyanate + sulfite + 2 H(+). It carries out the reaction thiosulfate + [thioredoxin]-dithiol = [thioredoxin]-disulfide + hydrogen sulfide + sulfite + 2 H(+). In terms of biological role, transferase that catalyzes the transfer of sulfur from thiosulfate to thiophilic acceptors such as cyanide or dithiols. May function in a CysM-independent thiosulfate assimilation pathway by catalyzing the conversion of thiosulfate to sulfite, which can then be used for L-cysteine biosynthesis. The polypeptide is Thiosulfate sulfurtransferase GlpE (Aliivibrio salmonicida (strain LFI1238) (Vibrio salmonicida (strain LFI1238))).